Here is a 792-residue protein sequence, read N- to C-terminus: Phenylalanine--tRNA ligase beta subunit (792 aa).

The 109-residue stretch at 39 to 147 (GEALDLIVVA…DDAPIGTPLA (109 aa)) folds into the tRNA-binding domain. Residues 400-475 (PAPASILLRR…RIRGYEHLPT (76 aa)) form the B5 domain. Mg(2+) is bound by residues Asp453, Asp459, Glu462, and Glu463. Residues 698-791 (SRFPFVRRDL…IQQRHDVRIR (94 aa)) form the FDX-ACB domain.

Belongs to the phenylalanyl-tRNA synthetase beta subunit family. Type 1 subfamily. Tetramer of two alpha and two beta subunits. Mg(2+) serves as cofactor.

It localises to the cytoplasm. It catalyses the reaction tRNA(Phe) + L-phenylalanine + ATP = L-phenylalanyl-tRNA(Phe) + AMP + diphosphate + H(+). The protein is Phenylalanine--tRNA ligase beta subunit (pheT) of Xylella fastidiosa (strain 9a5c).